The chain runs to 357 residues: Probable dual-specificity RNA methyltransferase RlmN (357 aa).

Glu-92 (proton acceptor) is an active-site residue. The 233-residue stretch at 98 to 330 (QEYGLSVCVT…KKNGINCVIR (233 aa)) folds into the Radical SAM core domain. A disulfide bond links Cys-105 and Cys-341. Residues Cys-112, Cys-116, and Cys-119 each contribute to the [4Fe-4S] cluster site. S-adenosyl-L-methionine is bound by residues 164–165 (GE), Ser-196, 219–221 (SLH), and Asn-297. Residue Cys-341 is the S-methylcysteine intermediate of the active site.

This sequence belongs to the radical SAM superfamily. RlmN family. It depends on [4Fe-4S] cluster as a cofactor.

It is found in the cytoplasm. The enzyme catalyses adenosine(2503) in 23S rRNA + 2 reduced [2Fe-2S]-[ferredoxin] + 2 S-adenosyl-L-methionine = 2-methyladenosine(2503) in 23S rRNA + 5'-deoxyadenosine + L-methionine + 2 oxidized [2Fe-2S]-[ferredoxin] + S-adenosyl-L-homocysteine. It catalyses the reaction adenosine(37) in tRNA + 2 reduced [2Fe-2S]-[ferredoxin] + 2 S-adenosyl-L-methionine = 2-methyladenosine(37) in tRNA + 5'-deoxyadenosine + L-methionine + 2 oxidized [2Fe-2S]-[ferredoxin] + S-adenosyl-L-homocysteine. Functionally, specifically methylates position 2 of adenine 2503 in 23S rRNA and position 2 of adenine 37 in tRNAs. In Enterococcus faecalis (strain ATCC 700802 / V583), this protein is Probable dual-specificity RNA methyltransferase RlmN.